The chain runs to 277 residues: MENTENSVDSKSIKSLEPKIIHGSKSVDSGISLDNSYKMDYPEMGLCIIINNKNFHKSTGMASRSGTDVDAANLRETFINLKYGVRNKNDLTREEIVELMRNVSKEDHSKRSSFVCVLLSHGEEGIIFGTNGPLDLKKITSFFRGDCCRSLTGKPKLFIIQACRGTELDCGIEADSGVEDDMACHKIPVEADFLYAYSTAPGYYSWRNSKDGSWFIQSLCAMLKQYADKLEFMHILTRVNRKVATEFESFSLDATFHAKKQIPCIVSMLTKELYFYH.

Met1 is modified (N-acetylmethionine). 2 propeptides span residues 1–9 (MENTENSVD) and 10–28 (SKSIKSLEPKIIHGSKSVD). An N6-acetyllysine modification is found at Lys11. Ser26 bears the Phosphoserine mark. Catalysis depends on residues His121 and Cys163. An S-nitrosocysteine; in inhibited form modification is found at Cys163.

This sequence belongs to the peptidase C14A family. As to quaternary structure, heterotetramer that consists of two anti-parallel arranged heterodimers, each one formed by a 17 kDa (p17) and a 12 kDa (p12) subunit. Interacts with BIRC6/bruce. Cleavage by granzyme B, caspase-6, caspase-8 and caspase-10 generates the two active subunits. Additional processing of the propeptides is likely due to the autocatalytic activity of the activated protease. Active heterodimers between the small subunit of caspase-7 protease and the large subunit of caspase-3 also occur and vice versa. Post-translationally, S-nitrosylated on its catalytic site cysteine in unstimulated cell lines and denitrosylated upon activation of the Fas apoptotic pathway, associated with an increase in intracellular caspase activity. Fas therefore activates caspase-3 not only by inducing the cleavage of the caspase zymogen to its active subunits, but also by stimulating the denitrosylation of its active site thiol. In terms of processing, ubiquitinated by BIRC6; this activity is inhibited by DIABLO/SMAC.

Its subcellular location is the cytoplasm. The catalysed reaction is Strict requirement for an Asp residue at positions P1 and P4. It has a preferred cleavage sequence of Asp-Xaa-Xaa-Asp-|- with a hydrophobic amino-acid residue at P2 and a hydrophilic amino-acid residue at P3, although Val or Ala are also accepted at this position.. Its activity is regulated as follows. Inhibited by BIRC6; following inhibition of BIRC6-caspase binding by DIABLO/SMAC, BIRC6 is subjected to caspase cleavage, leading to an increase in active caspases. In terms of biological role, involved in the activation cascade of caspases responsible for apoptosis execution. At the onset of apoptosis, it proteolytically cleaves poly(ADP-ribose) polymerase PARP1 at a '216-Asp-|-Gly-217' bond. Cleaves and activates sterol regulatory element binding proteins (SREBPs) between the basic helix-loop-helix leucine zipper domain and the membrane attachment domain. Cleaves and activates caspase-6, -7 and -9 (CASP6, CASP7 and CASP9, respectively). Cleaves and inactivates interleukin-18 (IL18). Triggers cell adhesion in sympathetic neurons through RET cleavage. Cleaves IL-1 beta between an Asp and an Ala, releasing the mature cytokine which is involved in a variety of inflammatory processes. Cleaves and inhibits serine/threonine-protein kinase AKT1 in response to oxidative stress. Acts as an inhibitor of type I interferon production during virus-induced apoptosis by mediating cleavage of antiviral proteins CGAS, IRF3 and MAVS, thereby preventing cytokine overproduction. Also involved in pyroptosis by mediating cleavage and activation of gasdermin-E (GSDME). Cleaves XRCC4 and phospholipid scramblase proteins XKR4, XKR8 and XKR9, leading to promote phosphatidylserine exposure on apoptotic cell surface. Cleaves BIRC6 following inhibition of BIRC6-caspase binding by DIABLO/SMAC. The chain is Caspase-3 (CASP3) from Macaca fascicularis (Crab-eating macaque).